The following is a 183-amino-acid chain: ATP-dependent protease subunit HslV (183 aa).

Thr10 is a catalytic residue. Na(+) is bound by residues Ala164, Cys167, and Thr170.

This sequence belongs to the peptidase T1B family. HslV subfamily. In terms of assembly, a double ring-shaped homohexamer of HslV is capped on each side by a ring-shaped HslU homohexamer. The assembly of the HslU/HslV complex is dependent on binding of ATP.

It localises to the cytoplasm. It carries out the reaction ATP-dependent cleavage of peptide bonds with broad specificity.. Its activity is regulated as follows. Allosterically activated by HslU binding. Functionally, protease subunit of a proteasome-like degradation complex believed to be a general protein degrading machinery. This is ATP-dependent protease subunit HslV from Rhizorhabdus wittichii (strain DSM 6014 / CCUG 31198 / JCM 15750 / NBRC 105917 / EY 4224 / RW1) (Sphingomonas wittichii).